We begin with the raw amino-acid sequence, 683 residues long: Elongation factor G-like protein (683 aa).

In terms of domain architecture, tr-type G spans 5 to 267; that stretch reads QNVRSAALIG…YLGDIGVSPE (263 aa). Residues 14–21, 73–77, and 127–130 each bind GTP; these read GHNGSGKS, DTPGF, and NQMD.

Belongs to the TRAFAC class translation factor GTPase superfamily. Classic translation factor GTPase family. EF-G/EF-2 subfamily.

In Thermotoga maritima (strain ATCC 43589 / DSM 3109 / JCM 10099 / NBRC 100826 / MSB8), this protein is Elongation factor G-like protein.